Consider the following 427-residue polypeptide: tRNA(Ile)-lysidine synthase (427 aa).

18 to 23 lines the ATP pocket; it reads SGGLDS.

Belongs to the tRNA(Ile)-lysidine synthase family.

The protein resides in the cytoplasm. The catalysed reaction is cytidine(34) in tRNA(Ile2) + L-lysine + ATP = lysidine(34) in tRNA(Ile2) + AMP + diphosphate + H(+). In terms of biological role, ligates lysine onto the cytidine present at position 34 of the AUA codon-specific tRNA(Ile) that contains the anticodon CAU, in an ATP-dependent manner. Cytidine is converted to lysidine, thus changing the amino acid specificity of the tRNA from methionine to isoleucine. The sequence is that of tRNA(Ile)-lysidine synthase from Pseudomonas putida (strain ATCC 47054 / DSM 6125 / CFBP 8728 / NCIMB 11950 / KT2440).